A 28-amino-acid polypeptide reads, in one-letter code: Trypsin inhibitor 4 (28 aa).

3 disulfide bridges follow: Cys2–Cys19, Cys9–Cys21, and Cys15–Cys27.

It belongs to the protease inhibitor I7 (squash-type serine protease inhibitor) family.

The protein localises to the secreted. In terms of biological role, inhibits trypsin. The sequence is that of Trypsin inhibitor 4 from Luffa aegyptiaca (Sponge gourd).